A 574-amino-acid chain; its full sequence is Tyrosinase (574 aa).

The Cu cation site is built by His67, His95, His104, His275, His279, and His304. Positions 93–95 (CTH) form a cross-link, 2'-(S-cysteinyl)-histidine (Cys-His).

It belongs to the tyrosinase family. Cu(2+) is required as a cofactor.

It catalyses the reaction 2 L-dopa + O2 = 2 L-dopaquinone + 2 H2O. The catalysed reaction is L-tyrosine + O2 = L-dopaquinone + H2O. This is a copper-containing oxidase that functions in the formation of pigments such as melanins and other polyphenolic compounds. This is Tyrosinase (TYR) from Podospora anserina (Pleurage anserina).